We begin with the raw amino-acid sequence, 217 residues long: GTP cyclohydrolase 1 (217 aa).

The Zn(2+) site is built by C109, H112, and C180.

The protein belongs to the GTP cyclohydrolase I family. Toroid-shaped homodecamer, composed of two pentamers of five dimers.

It carries out the reaction GTP + H2O = 7,8-dihydroneopterin 3'-triphosphate + formate + H(+). Its pathway is cofactor biosynthesis; 7,8-dihydroneopterin triphosphate biosynthesis; 7,8-dihydroneopterin triphosphate from GTP: step 1/1. This is GTP cyclohydrolase 1 from Vibrio campbellii (strain ATCC BAA-1116).